Reading from the N-terminus, the 499-residue chain is RNA polymerase sigma factor SigA (499 aa).

Composition is skewed to basic residues over residues 1–12 (MSSPKKNFKKPQ) and 77–87 (KKRRGRKPKHA). Disordered regions lie at residues 1–25 (MSSPKKNFKKPQPKTENQKQALNEE) and 68–89 (QENKESDVPKKRRGRKPKHAPL). The segment at 252–322 (LVTSNLRLVV…TRAIADQART (71 aa)) is sigma-70 factor domain-2. Positions 276 to 279 (DLIQ) match the Interaction with polymerase core subunit RpoC motif. The tract at residues 331-412 (ETINRLAKAE…DTDAQMPDEF (82 aa)) is sigma-70 factor domain-3. The segment at 425 to 480 (LLNNCLSEQEELIVRMRIGMPPYNETKTLDEVSQKIKIPREKIRQIETKAIRKLRQ) is sigma-70 factor domain-4. The segment at residues 453–472 (LDEVSQKIKIPREKIRQIET) is a DNA-binding region (H-T-H motif).

Belongs to the sigma-70 factor family. RpoD/SigA subfamily. Interacts transiently with the RNA polymerase catalytic core.

The protein localises to the cytoplasm. Sigma factors are initiation factors that promote the attachment of RNA polymerase to specific initiation sites and are then released. This sigma factor is the primary sigma factor during exponential growth. This Mycoplasma pneumoniae (strain ATCC 29342 / M129 / Subtype 1) (Mycoplasmoides pneumoniae) protein is RNA polymerase sigma factor SigA.